A 1224-amino-acid chain; its full sequence is uncharacterized protein (1224 aa).

6 disordered regions span residues 1-67 (MNQD…SSSI), 111-151 (QQSH…PPPL), 193-270 (QTEL…DPNI), 316-416 (DYNN…TVKK), 430-957 (SDSG…QEEK), and 1078-1167 (SFLP…TSHV). Over residues 10-48 (SFHSNNNSNSNHHHSYNNSINSGSSSSGSNNSSNNNSFN) the composition is skewed to low complexity. Residues 49–58 (DEIEGGEIQE) show a composition bias toward acidic residues. 3 stretches are compositionally biased toward low complexity: residues 126-140 (SSSS…SSSS), 193-212 (QTEL…SSPP), and 228-241 (SAPT…SVSS). A compositionally biased stretch (polar residues) spans 242–255 (LTQPQKPKSVQYSQ). Positions 260 to 270 (EIREEKVDPNI) are enriched in basic and acidic residues. The span at 316–338 (DYNNSNSNNSNNNNNNNNSITEN) shows a compositional bias: low complexity. A compositionally biased stretch (polar residues) spans 341-353 (DKMINNQPSSTNS). 2 stretches are compositionally biased toward low complexity: residues 379–413 (TTTT…TTPT) and 430–450 (SDSG…TSTP). 2 stretches are compositionally biased toward basic and acidic residues: residues 451 to 585 (KSKD…DKKK) and 630 to 646 (EIDK…KVES). Residues 662–719 (TTTTTTSTSSSSSLPSLSSSSSSLPLPSSSSSSSSSSSSSSSSSSSSSSSSSSSTTST) are compositionally biased toward low complexity. Pro residues predominate over residues 727–750 (PPPPPQQPPPPPPQQPPPPPPPIN). Over residues 755–892 (SEHDKKIIEK…SDRDRDRKDS (138 aa)) the composition is skewed to basic and acidic residues. A compositionally biased stretch (low complexity) spans 893–933 (NSNNNSNNNNNNNNNNNNNNNNNNNNKKDNNNNNNNNNNNN). Residues 948–957 (TPKKTKQEEK) show a composition bias toward basic and acidic residues. Residues 950–991 (KKTKQEEKLIRSQIDQIKEDAKDLKKLAKELQSKNQNECLEM) are a coiled coil. 2 stretches are compositionally biased toward low complexity: residues 1078-1108 (SFLP…TAPL) and 1114-1165 (NPSE…PNTS).

This is an uncharacterized protein from Dictyostelium discoideum (Social amoeba).